The primary structure comprises 432 residues: Adenylosuccinate synthetase (432 aa).

Residues 12–18 (GDEGKGK) and 40–42 (GHT) contribute to the GTP site. D13 functions as the Proton acceptor in the catalytic mechanism. Residues D13 and G40 each coordinate Mg(2+). Residues 13-16 (DEGK), 38-41 (NAGH), T130, R144, Q225, T240, and R304 each bind IMP. The Proton donor role is filled by H41. 300–306 (ATTGRPR) is a binding site for substrate. Residues R306, 332-334 (KLD), and 414-416 (SVG) each bind GTP.

The protein belongs to the adenylosuccinate synthetase family. Homodimer. It depends on Mg(2+) as a cofactor.

It is found in the cytoplasm. The catalysed reaction is IMP + L-aspartate + GTP = N(6)-(1,2-dicarboxyethyl)-AMP + GDP + phosphate + 2 H(+). The protein operates within purine metabolism; AMP biosynthesis via de novo pathway; AMP from IMP: step 1/2. Functionally, plays an important role in the de novo pathway of purine nucleotide biosynthesis. Catalyzes the first committed step in the biosynthesis of AMP from IMP. This Anaeromyxobacter dehalogenans (strain 2CP-1 / ATCC BAA-258) protein is Adenylosuccinate synthetase.